We begin with the raw amino-acid sequence, 1157 residues long: ATP-dependent helicase/deoxyribonuclease subunit B (1157 aa).

Residues methionine 1–lysine 277 enclose the UvrD-like helicase ATP-binding domain. ATP is bound at residue glycine 8 to threonine 15. Residues glutamate 272 to aspartate 578 enclose the UvrD-like helicase C-terminal domain. Cysteine 794, cysteine 1115, cysteine 1118, and cysteine 1124 together coordinate [4Fe-4S] cluster.

This sequence belongs to the helicase family. AddB/RexB type 1 subfamily. As to quaternary structure, heterodimer of AddA and AddB. Requires Mg(2+) as cofactor. [4Fe-4S] cluster serves as cofactor.

The heterodimer acts as both an ATP-dependent DNA helicase and an ATP-dependent, dual-direction single-stranded exonuclease. Recognizes the chi site generating a DNA molecule suitable for the initiation of homologous recombination. The AddB subunit has 5' -&gt; 3' nuclease activity but not helicase activity. This is ATP-dependent helicase/deoxyribonuclease subunit B from Listeria welshimeri serovar 6b (strain ATCC 35897 / DSM 20650 / CCUG 15529 / CIP 8149 / NCTC 11857 / SLCC 5334 / V8).